The following is a 198-amino-acid chain: Sensory transduction protein RegX3 (198 aa).

Residues 1 to 87 (MVTDGPAALA…ELIARIRAVL (87 aa)) enclose the Response regulatory domain. A 4-aspartylphosphate modification is found at aspartate 23. The segment at residues 99 to 198 (DGVLESGPLR…VRGLGYKLES (100 aa)) is a DNA-binding region (ompR/PhoB-type).

In terms of processing, phosphorylated by SenX3.

In terms of biological role, member of the two-component regulatory system SenX3/RegX3. The sequence is that of Sensory transduction protein RegX3 (rgx3) from Mycobacterium leprae (strain TN).